Consider the following 882-residue polypeptide: Alanine--tRNA ligase (882 aa).

Zn(2+) is bound by residues H574, H578, C682, and H686. The tract at residues 853–882 (GGRGGGKGALAQGGGLDPRKAREALPGLLP) is disordered. The segment covering 854–868 (GRGGGKGALAQGGGL) has biased composition (gly residues).

Belongs to the class-II aminoacyl-tRNA synthetase family. It depends on Zn(2+) as a cofactor.

The protein resides in the cytoplasm. It catalyses the reaction tRNA(Ala) + L-alanine + ATP = L-alanyl-tRNA(Ala) + AMP + diphosphate. Functionally, catalyzes the attachment of alanine to tRNA(Ala) in a two-step reaction: alanine is first activated by ATP to form Ala-AMP and then transferred to the acceptor end of tRNA(Ala). Also edits incorrectly charged Ser-tRNA(Ala) and Gly-tRNA(Ala) via its editing domain. The sequence is that of Alanine--tRNA ligase from Thermus thermophilus (strain ATCC 27634 / DSM 579 / HB8).